The primary structure comprises 229 residues: MAKLTKRMKAIKAGVDSTKQYEINEAITVLKQFTSTKFVESVDVAVNLGIDARKSDQNVRGATVLPHGTGRSVRVAVFTQGANVDAAKAAGADLVGMEDLAEQIKKGEMNFDVVIASPDAMRVVGQLGQILGPRGLMPNPKVGTVTPNVAEAVKNAKSGQIRYRNDKNGIIHTTIGKANFSAEQLKENLQALLAALTKAKPATAKGIFIRKVSVSTTQGAGVAVDQSSL.

It belongs to the universal ribosomal protein uL1 family. Part of the 50S ribosomal subunit.

In terms of biological role, binds directly to 23S rRNA. The L1 stalk is quite mobile in the ribosome, and is involved in E site tRNA release. Its function is as follows. Protein L1 is also a translational repressor protein, it controls the translation of the L11 operon by binding to its mRNA. This Histophilus somni (strain 129Pt) (Haemophilus somnus) protein is Large ribosomal subunit protein uL1.